The primary structure comprises 226 residues: UPF0173 metal-dependent hydrolase Dgeo_0136 (226 aa).

This sequence belongs to the UPF0173 family.

This Deinococcus geothermalis (strain DSM 11300 / CIP 105573 / AG-3a) protein is UPF0173 metal-dependent hydrolase Dgeo_0136.